The sequence spans 120 residues: Crustacean hyperglycemic hormones 1 (120 aa).

The signal sequence occupies residues 1–27 (MTAFRMVWSMLLASLLMLLVASSTAPA). Disulfide bonds link Cys53/Cys89, Cys69/Cys85, and Cys72/Cys98. Val118 bears the Valine amide mark.

Belongs to the arthropod CHH/MIH/GIH/VIH hormone family.

It localises to the secreted. Its function is as follows. Hormone found in the sinus gland of isopods and decapods which controls the blood sugar level. Has a secretagogue action over the amylase released from the midgut gland. May act as a stress hormone and may be involved in the control of molting and reproduction. The chain is Crustacean hyperglycemic hormones 1 (CHH1) from Penaeus monodon (Giant tiger prawn).